Reading from the N-terminus, the 142-residue chain is Large ribosomal subunit protein uL13 (142 aa).

It belongs to the universal ribosomal protein uL13 family. As to quaternary structure, part of the 50S ribosomal subunit.

In terms of biological role, this protein is one of the early assembly proteins of the 50S ribosomal subunit, although it is not seen to bind rRNA by itself. It is important during the early stages of 50S assembly. The chain is Large ribosomal subunit protein uL13 from Pseudomonas putida (strain W619).